Here is a 653-residue protein sequence, read N- to C-terminus: Epithelial sodium channel subunit gamma (653 aa).

Topologically, residues 1-55 (MAPGEKIKAKIKKNLPVKGPQAPTIKELMRWYCLNTNTHGCRRIVVSPGRLRRLL) are cytoplasmic. Residues 56 to 76 (WIAFTLTAVGLIFWQCALLVF) form a helical membrane-spanning segment. The Extracellular segment spans residues 77–538 (SFYTVSVSIK…EMLLSNFGGQ (462 aa)). 8 disulfide bridges follow: Cys-100/Cys-287, Cys-211/Cys-218, Cys-264/Cys-271, Cys-376/Cys-461, Cys-398/Cys-457, Cys-402/Cys-453, Cys-411/Cys-438, and Cys-413/Cys-427. A gating release of inhibition by proteolysis (GRIP); protease-sensitive region that is responsible for the proteolytic activation of the channel region spans residues 137 to 225 (RKQRDTESWS…SDCATYTFSS (89 aa)). Residue Asn-213 is glycosylated (N-linked (GlcNAc...) asparagine). Asn-275 is a glycosylation site (N-linked (GlcNAc...) asparagine). The N-linked (GlcNAc...) asparagine glycan is linked to Asn-501. The chain crosses the membrane as a helical span at residues 539–559 (LGLWMSCSVVCVIEIIEVFFI). Residues 560–653 (DSLSIVTRRQ…LADTRLPDEP (94 aa)) lie on the Cytoplasmic side of the membrane. The disordered stretch occupies residues 582–632 (AAPSAEAPSGAQGQENPALEIDDDLPTFTSALSLPPAPGAQVPGTPPPRYN). The short motif at 627–631 (PPPRY) is the PY motif; recruits WW domain-containing proteins and is thereby required for ubiquitination and inhibition of the channel by NEDD4 and NEDD4L element.

The protein belongs to the amiloride-sensitive sodium channel (TC 1.A.6) family. SCNN1G subfamily. In terms of assembly, component of the heterotrimeric epithelial sodium channel (ENaC) composed of an alpha/SCNN1A, a beta/SCNN1B and a gamma/SCNN1G subunit. Interacts with WWP1 (via WW domains). Interacts with WWP2 (via WW domains); inhibits the channel. Interacts with the full-length immature form of PCSK9 (pro-PCSK9); inhibits ENaC by promoting its proteasomal degradation. Interacts with BPIFA1; the interaction is indirect via SCNN1B and inhibits the proteolytic maturation of SCNN1A and SCNN1G and the activation of ENaC. Phosphorylated on serine and threonine residues. Aldosterone and insulin increase the basal level of phosphorylation. Post-translationally, ubiquitinated. Can be ubiquitinated at multiple sites and undergo monoubiquitination and polyubiquitination. Ubiquitination by NEDD4 or NEDD4L inhibits the ENaC channel through endocytosis, intracellular retention and degradation of its individual subunits. In terms of processing, ENaC is activated through the proteolytic maturation of its subunits. Furin cleaves the SCNN1G subunit first, followed by cleavage by prostasin (PRSS8), which results in a stepwise increase in the open probability of the channel due to the release of an inhibitory tract. BPIFA1, which is recruited by the SCNN1B subunit, prevents the proteolytic activation of ENaC. N-glycosylated. N-linked glycans are processed to complex type during ENaC complex assembly and transport to the plasma membrane.

It localises to the apical cell membrane. The enzyme catalyses Na(+)(in) = Na(+)(out). Originally identified and characterized by its inhibition by the diuretic drug amiloride. This is one of the three pore-forming subunits of the heterotrimeric epithelial sodium channel (ENaC), a critical regulator of sodium balance and fluid homeostasis. ENaC operates in epithelial tissues, where it mediates the electrodiffusion of sodium ions from extracellular fluid through the apical membrane of cells, with water following osmotically. It plays a key role in maintaining sodium homeostasis through electrogenic sodium reabsorption in the kidneys. Additionally, ENaC is essential for airway surface liquid homeostasis, which is crucial for proper mucus clearance. In Oryctolagus cuniculus (Rabbit), this protein is Epithelial sodium channel subunit gamma.